A 431-amino-acid polypeptide reads, in one-letter code: O-Mevalon transferase macI (431 aa).

N-linked (GlcNAc...) asparagine glycosylation occurs at asparagine 176. 4 consecutive transmembrane segments (helical) span residues 198–218 (IYAL…AILM), 301–321 (LLMM…YQVT), 336–356 (YFAL…VLGI), and 404–424 (LFAA…NFVA).

It belongs to the wax synthase family.

It localises to the membrane. The protein operates within secondary metabolite biosynthesis; terpenoid biosynthesis. Functionally, O-Mevalon transferase; part of the gene cluster that mediates the biosynthesis of macrophorins, isoprenoid epoxycyclohexenones containing cyclized drimane moieties. The first step of the pathway is the synthesis of 6-methylsalicylic acid (6-MSA) by the polyketide synthase macA. 6-MSA is then converted to m-cresol by the decarboxylase macB. The cytochrome P450 monooxygenase macC then catalyzes the oxidation of m-cresol to toluquinol. Epoxidation of toluquinol is then performed by the short chain dehydrogenase macD, with the help of macE, and a further prenylation by macG leads to 7-deacetoxyyanuthone A. The next step is the hydroxylation of C-22 of 7-deacetoxyyanuthone A by the cytochrome P450 monooxygenase macH to yield 22-deacetylyanuthone A. O-Mevalon transferase macI then attaches mevalon to the hydroxyl group of 22-deacetylyanuthone A to produce yanuthone E. The terpene cyclase macJ catalyzes the cyclization of 22-deacetylyanuthone A to macrophorin A. MacJ is also able to catalyze cyclization of yanuthone E and 7-deacetoxyyanuthone A to their corresponding macrophorins. The macJ products can be further modified by macH and macJ, as well as by the FAD-dependent monooxygenase macF, to produce additional macrophorins, including 4'-oxomacrophorin A, 4'-oxomacrophorin D and 4'-oxomacrophorin E. The protein is O-Mevalon transferase macI of Penicillium terrestre.